A 384-amino-acid polypeptide reads, in one-letter code: Branched-chain-amino-acid aminotransferase 1, mitochondrial (384 aa).

Residues 1–18 constitute a mitochondrion transit peptide; the sequence is MALRRCLPQYSTTSSYLS. Lys-231 bears the N6-(pyridoxal phosphate)lysine mark.

Belongs to the class-IV pyridoxal-phosphate-dependent aminotransferase family. Pyridoxal 5'-phosphate is required as a cofactor.

It localises to the mitochondrion. It carries out the reaction L-leucine + 2-oxoglutarate = 4-methyl-2-oxopentanoate + L-glutamate. The catalysed reaction is L-isoleucine + 2-oxoglutarate = (S)-3-methyl-2-oxopentanoate + L-glutamate. The enzyme catalyses L-valine + 2-oxoglutarate = 3-methyl-2-oxobutanoate + L-glutamate. It functions in the pathway amino-acid degradation; L-leucine degradation; 4-methyl-2-oxopentanoate from L-leucine (aminotransferase route): step 1/1. The protein operates within amino-acid degradation; L-valine degradation. Its function is as follows. Converts 2-oxo acids to branched-chain amino acids. Acts on leucine, isoleucine and valine. The polypeptide is Branched-chain-amino-acid aminotransferase 1, mitochondrial (BCAT1) (Arabidopsis thaliana (Mouse-ear cress)).